The following is a 211-amino-acid chain: FMN-dependent NADH:quinone oxidoreductase 3 (211 aa).

Position 17–19 (17–19 (SFS)) interacts with FMN.

Belongs to the azoreductase type 1 family. Homodimer. It depends on FMN as a cofactor.

The enzyme catalyses 2 a quinone + NADH + H(+) = 2 a 1,4-benzosemiquinone + NAD(+). The catalysed reaction is N,N-dimethyl-1,4-phenylenediamine + anthranilate + 2 NAD(+) = 2-(4-dimethylaminophenyl)diazenylbenzoate + 2 NADH + 2 H(+). Quinone reductase that provides resistance to thiol-specific stress caused by electrophilic quinones. In terms of biological role, also exhibits azoreductase activity. Catalyzes the reductive cleavage of the azo bond in aromatic azo compounds to the corresponding amines. This is FMN-dependent NADH:quinone oxidoreductase 3 from Halalkalibacterium halodurans (strain ATCC BAA-125 / DSM 18197 / FERM 7344 / JCM 9153 / C-125) (Bacillus halodurans).